A 261-amino-acid chain; its full sequence is Triosephosphate isomerase (261 aa).

10–12 (NWK) serves as a coordination point for substrate. Catalysis depends on histidine 100, which acts as the Electrophile. Glutamate 172 serves as the catalytic Proton acceptor. Substrate is bound by residues glycine 178, serine 218, and 239–240 (GG).

Belongs to the triosephosphate isomerase family. Homodimer.

It is found in the cytoplasm. The enzyme catalyses D-glyceraldehyde 3-phosphate = dihydroxyacetone phosphate. Its pathway is carbohydrate biosynthesis; gluconeogenesis. The protein operates within carbohydrate degradation; glycolysis; D-glyceraldehyde 3-phosphate from glycerone phosphate: step 1/1. Involved in the gluconeogenesis. Catalyzes stereospecifically the conversion of dihydroxyacetone phosphate (DHAP) to D-glyceraldehyde-3-phosphate (G3P). The polypeptide is Triosephosphate isomerase (Mycobacterium avium (strain 104)).